The following is a 275-amino-acid chain: Release factor glutamine methyltransferase (275 aa).

S-adenosyl-L-methionine contacts are provided by residues 114–118 (GTGSG), Asp-137, Trp-165, and Asn-180. A substrate-binding site is contributed by 180–183 (NPPY).

The protein belongs to the protein N5-glutamine methyltransferase family. PrmC subfamily.

It catalyses the reaction L-glutaminyl-[peptide chain release factor] + S-adenosyl-L-methionine = N(5)-methyl-L-glutaminyl-[peptide chain release factor] + S-adenosyl-L-homocysteine + H(+). Its function is as follows. Methylates the class 1 translation termination release factors RF1/PrfA and RF2/PrfB on the glutamine residue of the universally conserved GGQ motif. This chain is Release factor glutamine methyltransferase, found in Xylella fastidiosa (strain Temecula1 / ATCC 700964).